Consider the following 382-residue polypeptide: Histidine biosynthesis bifunctional protein HisB (382 aa).

The tract at residues 1 to 190 (MQKIVFIDRD…EIYEFLRLPA (190 aa)) is histidinol-phosphatase. Catalysis depends on D8, which acts as the Nucleophile. 3 residues coordinate Mg(2+): D8, D10, and D129. Catalysis depends on D10, which acts as the Proton donor. Residues 191 to 382 (RTALVERNTK…DNLPSTKGVL (192 aa)) form an imidazoleglycerol-phosphate dehydratase region.

In the N-terminal section; belongs to the histidinol-phosphatase family. This sequence in the C-terminal section; belongs to the imidazoleglycerol-phosphate dehydratase family. The cofactor is Mg(2+).

It localises to the cytoplasm. It catalyses the reaction D-erythro-1-(imidazol-4-yl)glycerol 3-phosphate = 3-(imidazol-4-yl)-2-oxopropyl phosphate + H2O. It carries out the reaction L-histidinol phosphate + H2O = L-histidinol + phosphate. It functions in the pathway amino-acid biosynthesis; L-histidine biosynthesis; L-histidine from 5-phospho-alpha-D-ribose 1-diphosphate: step 6/9. Its pathway is amino-acid biosynthesis; L-histidine biosynthesis; L-histidine from 5-phospho-alpha-D-ribose 1-diphosphate: step 8/9. The sequence is that of Histidine biosynthesis bifunctional protein HisB from Spirosoma linguale (strain ATCC 33905 / DSM 74 / LMG 10896 / Claus 1).